The following is an 88-amino-acid chain: HssA/B-like protein 9 (88 aa).

The segment covering 1–14 (MSILSALTSISNPM) has biased composition (polar residues). The tract at residues 1–26 (MSILSALTSISNPMKSSKSSVANGGG) is disordered.

Belongs to the hssA/B family.

The polypeptide is HssA/B-like protein 9 (hssl9) (Dictyostelium discoideum (Social amoeba)).